The following is a 120-amino-acid chain: MKILFVLISILYAVYCFSSEEDVDSAYLANELEPVEDINSEQYAALEPKEEQGRSCADMGQDCKDDCDCCLNIATCNCWFGRYFCSCTFGDYQTCLRKKGKCKRNRPQSCPRSNLNRKKG.

Positions 1 to 16 are cleaved as a signal peptide; the sequence is MKILFVLISILYAVYC. Residues 17–54 constitute a propeptide that is removed on maturation; sequence FSSEEDVDSAYLANELEPVEDINSEQYAALEPKEEQGR. 4 disulfide bridges follow: Cys-56/Cys-70, Cys-63/Cys-76, Cys-69/Cys-87, and Cys-78/Cys-85. Residues 56 to 95 form the Agouti domain; it reads CADMGQDCKDDCDCCLNIATCNCWFGRYFCSCTFGDYQTC.

It belongs to the neurotoxin 05 (agouti) family. Contains 6 disulfide bonds. In terms of tissue distribution, expressed by the venom gland.

The protein resides in the secreted. The protein is U13-lycotoxin-Ls1a of Lycosa singoriensis (Wolf spider).